Consider the following 202-residue polypeptide: Large ribosomal subunit protein bL25 (202 aa).

It belongs to the bacterial ribosomal protein bL25 family. CTC subfamily. As to quaternary structure, part of the 50S ribosomal subunit; part of the 5S rRNA/L5/L18/L25 subcomplex. Contacts the 5S rRNA. Binds to the 5S rRNA independently of L5 and L18.

In terms of biological role, this is one of the proteins that binds to the 5S RNA in the ribosome where it forms part of the central protuberance. This chain is Large ribosomal subunit protein bL25, found in Clostridium perfringens (strain ATCC 13124 / DSM 756 / JCM 1290 / NCIMB 6125 / NCTC 8237 / Type A).